A 116-amino-acid chain; its full sequence is Large ribosomal subunit protein uL22c (116 aa).

The protein belongs to the universal ribosomal protein uL22 family. As to quaternary structure, part of the 50S ribosomal subunit.

The protein resides in the plastid. Its subcellular location is the chloroplast. This protein binds specifically to 23S rRNA. In terms of biological role, the globular domain of the protein is located near the polypeptide exit tunnel on the outside of the subunit, while an extended beta-hairpin is found that lines the wall of the exit tunnel in the center of the 70S ribosome. This is Large ribosomal subunit protein uL22c (rpl22) from Porphyra purpurea (Red seaweed).